A 126-amino-acid chain; its full sequence is Aspartate 1-decarboxylase (126 aa).

The active-site Schiff-base intermediate with substrate; via pyruvic acid is the serine 25. A Pyruvic acid (Ser) modification is found at serine 25. Threonine 57 contacts substrate. The active-site Proton donor is tyrosine 58. 72-74 serves as a coordination point for substrate; that stretch reads GAA.

This sequence belongs to the PanD family. In terms of assembly, heterooctamer of four alpha and four beta subunits. Requires pyruvate as cofactor. Is synthesized initially as an inactive proenzyme, which is activated by self-cleavage at a specific serine bond to produce a beta-subunit with a hydroxyl group at its C-terminus and an alpha-subunit with a pyruvoyl group at its N-terminus.

The protein localises to the cytoplasm. It carries out the reaction L-aspartate + H(+) = beta-alanine + CO2. It participates in cofactor biosynthesis; (R)-pantothenate biosynthesis; beta-alanine from L-aspartate: step 1/1. In terms of biological role, catalyzes the pyruvoyl-dependent decarboxylation of aspartate to produce beta-alanine. In Campylobacter jejuni subsp. jejuni serotype O:6 (strain 81116 / NCTC 11828), this protein is Aspartate 1-decarboxylase.